A 351-amino-acid chain; its full sequence is Histidinol-phosphate aminotransferase (351 aa).

Lys-213 is modified (N6-(pyridoxal phosphate)lysine).

Belongs to the class-II pyridoxal-phosphate-dependent aminotransferase family. Histidinol-phosphate aminotransferase subfamily. Homodimer. The cofactor is pyridoxal 5'-phosphate.

It catalyses the reaction L-histidinol phosphate + 2-oxoglutarate = 3-(imidazol-4-yl)-2-oxopropyl phosphate + L-glutamate. It participates in amino-acid biosynthesis; L-histidine biosynthesis; L-histidine from 5-phospho-alpha-D-ribose 1-diphosphate: step 7/9. In Thermoanaerobacter pseudethanolicus (strain ATCC 33223 / 39E) (Clostridium thermohydrosulfuricum), this protein is Histidinol-phosphate aminotransferase.